The chain runs to 348 residues: Protein RecA (348 aa).

66 to 73 provides a ligand contact to ATP; sequence GPESSGKT.

Belongs to the RecA family.

The protein localises to the cytoplasm. In terms of biological role, can catalyze the hydrolysis of ATP in the presence of single-stranded DNA, the ATP-dependent uptake of single-stranded DNA by duplex DNA, and the ATP-dependent hybridization of homologous single-stranded DNAs. It interacts with LexA causing its activation and leading to its autocatalytic cleavage. This Legionella pneumophila protein is Protein RecA.